The sequence spans 540 residues: MAVILLLALALVLGCYCALHRHKLADIYLRPLLKNTLLEDFYHAELIQPEAPKRRRRGIWDIPGPKRIPFLGTKWIFLLFFRRYKMTKLHEVYADLNRQYGDIVLEVMPSNVPIVHLYNRDDLEKVLKYPSKYPFRPPTEIIVMYRQSRPDRYASVGIVNEQGPMWQRLRSSLTSSITSPRVLQNFLPALNAVCDDFIELLRARRDPDTLVVPNFEELANLMGLEAVCTLMLGRRMGFLAIDTKQPQKISQLAAAVKQLFISQRDSYYGLGLWKYFPTKTYRDFARAEDLIYDVISEIIDHELEELKKSAACEDDEAAGLRSIFLNILELKDLDIRDKKSAIIDFIAAGIETLANTLLFVLSSVTGDPGAMPRILSEFCEYRDTNILQDALTNATYTKACIQESYRLRPTAFCLARILEEDMELSGYSLNAGTVVLCQNMIACHKDSNFQGAKQFTPERWIDPATENFTVNVDNASIVVPFGVGRRSCPGKRFVEMEVVLLLAKMVLAFDVSFVKPLETEFEFLLAPKTPLSLRLSDRVF.

Cysteine 488 lines the heme pocket.

Belongs to the cytochrome P450 family. The cofactor is heme. In terms of tissue distribution, strong expression by embryonic stage 10 in epidermis, decreases significantly in older embryos. Third instar larvae show expression in the midgut copper cells, Malpighian tubules and fat body. In the adult ovaries, expression is seen in both nurse cells and centripetally migrating follicle cells.

It is found in the mitochondrion membrane. The catalysed reaction is ecdysone + AH2 + O2 = 20-hydroxyecdysone + A + H2O. The protein operates within steroid biosynthesis; ecdysteroid biosynthesis. In terms of biological role, required for CNS development; midline glial cells. Involved in the metabolism of insect hormones; responsible for all ecdysone 20-monooxygenase activity during embryonic, larval and adult stages. May be involved in the breakdown of synthetic insecticides. The sequence is that of Ecdysone 20-monooxygenase (shd) from Drosophila melanogaster (Fruit fly).